The following is a 558-amino-acid chain: Adenine deaminase (558 aa).

This sequence belongs to the metallo-dependent hydrolases superfamily. Adenine deaminase family. Mn(2+) serves as cofactor.

The enzyme catalyses adenine + H2O + H(+) = hypoxanthine + NH4(+). In Methanoregula boonei (strain DSM 21154 / JCM 14090 / 6A8), this protein is Adenine deaminase.